A 1024-amino-acid polypeptide reads, in one-letter code: Beta-galactosidase (1024 aa).

Positions 103 and 202 each coordinate substrate. Aspartate 202 lines the Na(+) pocket. Mg(2+) contacts are provided by glutamate 417, histidine 419, and glutamate 462. Residues glutamate 462 and 538–541 contribute to the substrate site; that span reads EYAH. Glutamate 462 serves as the catalytic Proton donor. Catalysis depends on glutamate 538, which acts as the Nucleophile. Position 598 (asparagine 598) interacts with Mg(2+). Positions 602 and 605 each coordinate Na(+). Substrate contacts are provided by asparagine 605 and tryptophan 1000.

The protein belongs to the glycosyl hydrolase 2 family. Homotetramer. Requires Mg(2+) as cofactor. It depends on Na(+) as a cofactor.

The catalysed reaction is Hydrolysis of terminal non-reducing beta-D-galactose residues in beta-D-galactosides.. The protein is Beta-galactosidase of Escherichia coli O157:H7.